Reading from the N-terminus, the 314-residue chain is tRNA dimethylallyltransferase (314 aa).

Residue 15–22 (GPTATGKS) participates in ATP binding. 17–22 (TATGKS) contributes to the substrate binding site. An interaction with substrate tRNA region spans residues 40–43 (DSML).

The protein belongs to the IPP transferase family. In terms of assembly, monomer. Mg(2+) is required as a cofactor.

The enzyme catalyses adenosine(37) in tRNA + dimethylallyl diphosphate = N(6)-dimethylallyladenosine(37) in tRNA + diphosphate. Catalyzes the transfer of a dimethylallyl group onto the adenine at position 37 in tRNAs that read codons beginning with uridine, leading to the formation of N6-(dimethylallyl)adenosine (i(6)A). The sequence is that of tRNA dimethylallyltransferase from Pelotomaculum thermopropionicum (strain DSM 13744 / JCM 10971 / SI).